A 274-amino-acid chain; its full sequence is Ribonucleoside-diphosphate reductase small chain (274 aa).

Fe cation contacts are provided by Asp70, Glu101, and His104. Tyr108 is an active-site residue. 3 residues coordinate Fe cation: Glu163, Glu197, and His200.

This sequence belongs to the ribonucleoside diphosphate reductase small chain family. As to quaternary structure, heterodimer of a large and a small chain. The cofactor is Fe cation.

The enzyme catalyses a 2'-deoxyribonucleoside 5'-diphosphate + [thioredoxin]-disulfide + H2O = a ribonucleoside 5'-diphosphate + [thioredoxin]-dithiol. Its function is as follows. Ribonucleoside-diphosphate reductase holoenzyme provides the precursors necessary for viral DNA synthesis. Allows virus growth in non-dividing cells. Catalyzes the biosynthesis of deoxyribonucleotides from the corresponding ribonucleotides. The polypeptide is Ribonucleoside-diphosphate reductase small chain (Sus scrofa (Pig)).